The following is a 364-amino-acid chain: Probable dual-specificity RNA methyltransferase RlmN (364 aa).

The active-site Proton acceptor is Glu107. Residues His113 to Asp346 form the Radical SAM core domain. Cys120 and Cys351 are joined by a disulfide. [4Fe-4S] cluster is bound by residues Cys127, Cys131, and Cys134. S-adenosyl-L-methionine-binding positions include Gly177–Glu178, Ser209, Ser232–His234, and Asn308. The active-site S-methylcysteine intermediate is Cys351.

This sequence belongs to the radical SAM superfamily. RlmN family. The cofactor is [4Fe-4S] cluster.

The protein localises to the cytoplasm. It carries out the reaction adenosine(2503) in 23S rRNA + 2 reduced [2Fe-2S]-[ferredoxin] + 2 S-adenosyl-L-methionine = 2-methyladenosine(2503) in 23S rRNA + 5'-deoxyadenosine + L-methionine + 2 oxidized [2Fe-2S]-[ferredoxin] + S-adenosyl-L-homocysteine. The enzyme catalyses adenosine(37) in tRNA + 2 reduced [2Fe-2S]-[ferredoxin] + 2 S-adenosyl-L-methionine = 2-methyladenosine(37) in tRNA + 5'-deoxyadenosine + L-methionine + 2 oxidized [2Fe-2S]-[ferredoxin] + S-adenosyl-L-homocysteine. In terms of biological role, specifically methylates position 2 of adenine 2503 in 23S rRNA and position 2 of adenine 37 in tRNAs. Confers resistance to some classes of antibiotics. This Staphylococcus epidermidis (strain ATCC 12228 / FDA PCI 1200) protein is Probable dual-specificity RNA methyltransferase RlmN.